Here is a 206-residue protein sequence, read N- to C-terminus: RNA pyrophosphohydrolase (206 aa).

One can recognise a Nudix hydrolase domain in the interval 6–150 (GYRPNVGIVI…KRDVYRKVMK (145 aa)). The Nudix box motif lies at 38–59 (GGINEGENIETAMYRELYEEVG). The segment covering 162-191 (KPETVEKPRVERTEKRDFQKRDNQKREFRK) has biased composition (basic and acidic residues). The tract at residues 162–206 (KPETVEKPRVERTEKRDFQKRDNQKREFRKSARMWNNSHQKGKAQ) is disordered.

It belongs to the Nudix hydrolase family. RppH subfamily. The cofactor is a divalent metal cation.

Functionally, accelerates the degradation of transcripts by removing pyrophosphate from the 5'-end of triphosphorylated RNA, leading to a more labile monophosphorylated state that can stimulate subsequent ribonuclease cleavage. In Actinobacillus pleuropneumoniae serotype 5b (strain L20), this protein is RNA pyrophosphohydrolase.